Consider the following 496-residue polypeptide: Autophagy-related protein 21 (496 aa).

One copy of the WD 1 repeat lies at 1 to 35 (MKVLQFNQDATCCVVAASSHQISIFNCDPFGKCFE). The tract at residues 41-86 (SKKKTSNNNGTASNSESRNNEESILITNGSRDRTDAEEEEDNEDNA) is disordered. Over residues 46-57 (SNNNGTASNSES) the composition is skewed to low complexity. The segment covering 75–84 (DAEEEEDNED) has biased composition (acidic residues). A WD 2 repeat occupies 148–190 (VMNRKRMCVLLESDQIFIYDISCMKPLETIDLWEDHYKRSQAN). Threonine 213 carries the phosphothreonine modification. Serine 237 is modified (phosphoserine). 3 WD repeats span residues 294–334 (VHKG…DYMS), 346–385 (TRLCNLYQLAFDKSMTMIGCVGDTDTIHLFKLDDASNSLP), and 448–488 (VNES…GECV). Positions 342–346 (FRRGT) match the L/FRRG motif motif.

This sequence belongs to the WD repeat PROPPIN family.

It is found in the cytoplasm. Its subcellular location is the vacuole membrane. Required for cytoplasm to vacuole transport (Cvt) vesicles formation and mitophagy. Involved in binding of phosphatidylethanolamine to ATG8 and in recruitment of ATG8 and ATG5 to the pre-autophagosomal structure. Protects ATG8 from ARG4-mediated cleavage. Essential for maturation of proaminopeptidase I. The chain is Autophagy-related protein 21 (ATG21) from Saccharomyces cerevisiae (strain YJM789) (Baker's yeast).